The primary structure comprises 337 residues: Monoacylglycerol lipase abhd6-B (337 aa).

Residues 1–19 (MDIDVLNMFLVAGGTLLVP) are Extracellular-facing. Residues 20–42 (LLAFMTSFLLWPAALIRIYYWYW) traverse the membrane as a helical; Signal-anchor for type II membrane protein segment. The Cytoplasmic portion of the chain corresponds to 43–337 (RRALGMQVKY…QSTDNHKKHD (295 aa)). Residues 72 to 313 (PSVLMLHGFS…CGHSVVMERP (242 aa)) form the AB hydrolase-1 domain. The Nucleophile role is filled by Ser148. Catalysis depends on charge relay system residues Asp278 and His306.

It belongs to the AB hydrolase superfamily.

Its subcellular location is the late endosome membrane. The protein localises to the lysosome membrane. It localises to the mitochondrion membrane. It carries out the reaction Hydrolyzes glycerol monoesters of long-chain fatty acids.. The enzyme catalyses 1-octanoylglycerol + H2O = octanoate + glycerol + H(+). It catalyses the reaction 1-decanoylglycerol + H2O = decanoate + glycerol + H(+). The catalysed reaction is 1-dodecanoylglycerol + H2O = dodecanoate + glycerol + H(+). It carries out the reaction 1-tetradecanoylglycerol + H2O = tetradecanoate + glycerol + H(+). The enzyme catalyses 2-hexadecanoylglycerol + H2O = glycerol + hexadecanoate + H(+). It catalyses the reaction 2-(9Z-octadecenoyl)-glycerol + H2O = glycerol + (9Z)-octadecenoate + H(+). The catalysed reaction is 1-(9Z-octadecenoyl)-glycerol + H2O = glycerol + (9Z)-octadecenoate + H(+). It carries out the reaction 2-(9Z,12Z-octadecadienoyl)-glycerol + H2O = (9Z,12Z)-octadecadienoate + glycerol + H(+). The enzyme catalyses 2-(5Z,8Z,11Z,14Z-eicosatetraenoyl)-glycerol + H2O = glycerol + (5Z,8Z,11Z,14Z)-eicosatetraenoate + H(+). It catalyses the reaction 1-(5Z,8Z,11Z,14Z-eicosatetraenoyl)-glycerol + H2O = glycerol + (5Z,8Z,11Z,14Z)-eicosatetraenoate + H(+). The catalysed reaction is 1-(9Z,12Z-octadecadienoyl)-glycerol + H2O = (9Z,12Z)-octadecadienoate + glycerol + H(+). It carries out the reaction 3-(9Z-octadecenoyl)-sn-glycero-1-phospho-(3'-(9Z-octadecenoyl)-1'-sn-glycerol) + H2O = 3-(9Z-octadecenoyl)-sn-glycero-1-phospho-(1'-sn-glycerol) + (9Z)-octadecenoate + H(+). The enzyme catalyses (S,S)-2-(9Z-octadecenoyl)-sn-glycero-1-phospho-(2'-(9Z-octadecenoyl)-1'-sn-glycerol) + H2O = (S,S)-2-(9Z-octadecenoyl)-sn-glycero-1-phospho-(1'-sn-glycerol) + (9Z)-octadecenoate + H(+). It catalyses the reaction (R,R)-2-(9Z-octadecenoyl)-sn-glycero-3-phospho-(2'-(9Z-octadecenoyl)-3'-sn-glycerol) + H2O = (R,R)-2-(9Z-octadecenoyl)-sn-glycero-3-phospho-(3'-sn-glycerol) + (9Z)-octadecenoate + H(+). Functionally, lipase that preferentially hydrolysis medium-chain saturated monoacylglycerols including 2-arachidonoylglycerol. Through 2-arachidonoylglycerol degradation may regulate endocannabinoid signaling pathways. Also has a lysophosphatidyl lipase activity with a preference for lysophosphatidylglycerol among other lysophospholipids. Also able to degrade bis(monoacylglycero)phosphate (BMP) and constitutes the major enzyme for BMP catabolism. BMP, also known as lysobisphosphatidic acid, is enriched in late endosomes and lysosomes and plays a key role in the formation of intraluminal vesicles and in lipid sorting. In Xenopus laevis (African clawed frog), this protein is Monoacylglycerol lipase abhd6-B (abhd6-b).